We begin with the raw amino-acid sequence, 291 residues long: MAITAALVKELRDSTGAGMMDAKKALTETDGDMEAAVDWLRTKGLAKAAKKSGRTAAEGLVAVVVEGGKGVAVEVNSETDFVAKNSDFQEMVGKIAAAALAADDVDALLAADLGGKSVADTLTAKIATIGENMSVRRLAKLEGETVVTYVHNAATTGMGKIGVLVAMKGGDEALGKQVAMHIAAVNPAALSEAEMDPVVVEKEKQVQMDIARESGKPEAVIEKMIEGRMKKFVAESTLLSQQFVVNPDLTVGAAAAEAGAEITGFVRLEVGEGIVVEKEDFAAEVAKAAQG.

The involved in Mg(2+) ion dislocation from EF-Tu stretch occupies residues 79-82 (TDFV).

This sequence belongs to the EF-Ts family.

The protein localises to the cytoplasm. Functionally, associates with the EF-Tu.GDP complex and induces the exchange of GDP to GTP. It remains bound to the aminoacyl-tRNA.EF-Tu.GTP complex up to the GTP hydrolysis stage on the ribosome. The sequence is that of Elongation factor Ts from Ruegeria pomeroyi (strain ATCC 700808 / DSM 15171 / DSS-3) (Silicibacter pomeroyi).